The sequence spans 283 residues: Elongation factor Ts (283 aa).

The involved in Mg(2+) ion dislocation from EF-Tu stretch occupies residues 80-83; the sequence is TDFV.

This sequence belongs to the EF-Ts family.

The protein resides in the cytoplasm. Functionally, associates with the EF-Tu.GDP complex and induces the exchange of GDP to GTP. It remains bound to the aminoacyl-tRNA.EF-Tu.GTP complex up to the GTP hydrolysis stage on the ribosome. The polypeptide is Elongation factor Ts (Salmonella paratyphi A (strain ATCC 9150 / SARB42)).